The following is a 63-amino-acid chain: Large ribosomal subunit protein uL29 (63 aa).

Belongs to the universal ribosomal protein uL29 family.

The sequence is that of Large ribosomal subunit protein uL29 from Shewanella oneidensis (strain ATCC 700550 / JCM 31522 / CIP 106686 / LMG 19005 / NCIMB 14063 / MR-1).